The sequence spans 168 residues: Peptide deformylase (168 aa).

Residues Cys91 and His133 each coordinate Fe cation. Glu134 is an active-site residue. Residue His137 participates in Fe cation binding.

This sequence belongs to the polypeptide deformylase family. Requires Fe(2+) as cofactor.

It carries out the reaction N-terminal N-formyl-L-methionyl-[peptide] + H2O = N-terminal L-methionyl-[peptide] + formate. Functionally, removes the formyl group from the N-terminal Met of newly synthesized proteins. Requires at least a dipeptide for an efficient rate of reaction. N-terminal L-methionine is a prerequisite for activity but the enzyme has broad specificity at other positions. The sequence is that of Peptide deformylase from Endomicrobium trichonymphae.